Consider the following 180-residue polypeptide: NAD(P)H-quinone oxidoreductase subunit I, chloroplastic (180 aa).

2 4Fe-4S ferredoxin-type domains span residues 55-84 (GRIH…VDWR) and 95-124 (LNYS…MTEE). [4Fe-4S] cluster-binding residues include Cys-64, Cys-67, Cys-70, Cys-74, Cys-104, Cys-107, Cys-110, and Cys-114.

It belongs to the complex I 23 kDa subunit family. NDH is composed of at least 16 different subunits, 5 of which are encoded in the nucleus. It depends on [4Fe-4S] cluster as a cofactor.

The protein resides in the plastid. It is found in the chloroplast thylakoid membrane. The enzyme catalyses a plastoquinone + NADH + (n+1) H(+)(in) = a plastoquinol + NAD(+) + n H(+)(out). The catalysed reaction is a plastoquinone + NADPH + (n+1) H(+)(in) = a plastoquinol + NADP(+) + n H(+)(out). In terms of biological role, NDH shuttles electrons from NAD(P)H:plastoquinone, via FMN and iron-sulfur (Fe-S) centers, to quinones in the photosynthetic chain and possibly in a chloroplast respiratory chain. The immediate electron acceptor for the enzyme in this species is believed to be plastoquinone. Couples the redox reaction to proton translocation, and thus conserves the redox energy in a proton gradient. This is NAD(P)H-quinone oxidoreductase subunit I, chloroplastic from Hordeum vulgare (Barley).